The following is a 122-amino-acid chain: Large ribosomal subunit protein uL14c (122 aa).

Belongs to the universal ribosomal protein uL14 family. Part of the 50S ribosomal subunit.

The protein localises to the plastid. It is found in the chloroplast. In terms of biological role, binds to 23S rRNA. The protein is Large ribosomal subunit protein uL14c of Guizotia abyssinica (Niger).